The sequence spans 780 residues: Cullin-5 (780 aa).

Serine 34 carries the phosphoserine modification. At threonine 210 the chain carries Phosphothreonine. In terms of domain architecture, Cullin neddylation spans 711 to 772 (RILRTQEAII…HKYIRRDESD (62 aa)). Lysine 724 is covalently cross-linked (Glycyl lysine isopeptide (Lys-Gly) (interchain with G-Cter in NEDD8)).

This sequence belongs to the cullin family. In terms of assembly, component of multiple cullin-5-RING E3 ubiquitin-protein ligase complexes (ECS complexes, also named CRL5 complexes) formed of CUL5, Elongin BC (ELOB and ELOC), RNF7/RBX2 and a variable SOCS box domain-containing protein as substrate-specific recognition component. CUL5-containing ECS complexes specifically contain RNF7/RBX2, and not RBX1, as catalytic subunit. Component of the ECS(ASB2) complex with the substrate recognition component ASB2. Component of the ECS(ASB6) complex with the substrate recognition component ASB6. Component of the ECS(ASB7) complex with the substrate recognition component ASB7. Component of the ECS(ASB9) complex with the substrate recognition component ASB9. Component of the ECS(ASB11) complex with the substrate recognition component ASB11. Component of the ECS(ASB12) complex with the substrate recognition component ASB12. Component of the ECS(LRRC41) complex with the substrate recognition component LRRC41. Component of the ECS(SOCS1) complex with the substrate recognition component SOCS1. Component of the ECS(SOCS2) complex with the substrate recognition component SOCS2. Component of the ECS(WSB1) complex with the substrate recognition subunit WSB1. Component of the ECS(SOCS3) complex with the substrate recognition component SOCS3. Component of the ECS(SOCS7) complex with the substrate recognition component SOCS7. Component of the ECS(SPSB1) complex with the substrate recognition component SPSB1. Component of the ECS(SPSB3) complex with the substrate recognition component SPSB3. Component of the ECS(SPSB2) complex with the substrate recognition component SPSB2. Component of the ECS(SPSB4) complex with the substrate recognition component SPSB4. Component of the ECS(RAB40) complex with the substrate recognition subunit RAB40A, RAB40B or RAB40C. Component of the ECS(KLHDC1) complex with the substrate recognition component KLHDC1. Component of the ECS(PCMTD1) complex with the substrate recognition subunit PCMTD1. May also form complexes containing RBX1 and ELOA or VHL; additional evidence is however required to confirm this result in vivo. Interacts (when neddylated) with ARIH2; leading to activate the E3 ligase activity of ARIH2. Interacts with ERCC6; the interaction is induced by DNA damaging agents or inhibitors of RNA polymerase II elongation. Interacts with ELOA (via the BC-box). Interacts (unneddylated form) with DCUN1D1, DCUN1D2, DCUN1D3, DCUN1D4 and DCUN1D5; these interactions promote the cullin neddylation. Neddylated; which enhances the ubiquitination activity of ECS complexes and prevents binding of the inhibitor CAND1. Deneddylated via its interaction with the COP9 signalosome (CSN).

It is found in the nucleus. Its pathway is protein modification; protein ubiquitination. Its function is as follows. Core component of multiple cullin-5-RING E3 ubiquitin-protein ligase complexes (ECS complexes, also named CRL5 complexes), which mediate the ubiquitination and subsequent proteasomal degradation of target proteins. Acts a scaffold protein that contributes to catalysis through positioning of the substrate and the ubiquitin-conjugating enzyme. The functional specificity of the E3 ubiquitin-protein ligase complex depends on the variable SOCS box-containing substrate recognition component. Acts as a key regulator of neuron positioning during cortex development: component of various SOCS-containing ECS complexes, such as the ECS(SOCS7) complex, that regulate reelin signaling by mediating ubiquitination and degradation of DAB1. ECS(SOCS1) seems to direct ubiquitination of JAK2. The ECS(SOCS2) complex mediates the ubiquitination and subsequent proteasomal degradation of phosphorylated EPOR and GHR. The ECS(SPSB3) complex catalyzes ubiquitination of nuclear CGAS. ECS(KLHDC1) complex is part of the DesCEND (destruction via C-end degrons) pathway and mediates ubiquitination and degradation of truncated SELENOS selenoprotein produced by failed UGA/Sec decoding, which ends with a glycine. The ECS(ASB9) complex mediates ubiquitination and degradation of CKB. As part of some ECS complex, promotes 'Lys-11'-linked ubiquitination and degradation of BTRC. As part of a multisubunit ECS complex, polyubiquitinates monoubiquitinated POLR2A. As part of the ECS(RAB40C) complex, mediates ANKRD28 ubiquitination and degradation, thereby regulating protein phosphatase 6 (PP6) complex activity and focal adhesion assembly during cell migration. As part of the ECS(RAB40A) complex, mediates RHOU 'Lys-48'-linked ubiquitination and degradation, thus inhibiting focal adhesion disassembly during cell migration. As part of the ECS(RAB40B) complex, mediates LIMA1/EPLIN and RAP2 ubiquitination, thereby regulating actin cytoskeleton dynamics and stress fiber formation during cell migration. May form a cell surface vasopressin receptor. This chain is Cullin-5, found in Pongo abelii (Sumatran orangutan).